A 1140-amino-acid polypeptide reads, in one-letter code: Chromosome partition protein Smc (1140 aa).

34–41 contacts ATP; it reads PNGSGKSN. A coiled-coil region spans residues 160-484; that stretch reads VDQFDSEIER…EKEASAKIAS (325 aa). An SMC hinge domain is found at 502–619; it reads EGVIGLVRDL…VQDIDAGRRL (118 aa). Positions 660–990 form a coiled coil; that stretch reads LEGMKIQLSS…MLNEKKREVF (331 aa).

It belongs to the SMC family. In terms of assembly, homodimer.

The protein localises to the cytoplasm. Its function is as follows. Required for chromosome condensation and partitioning. This is Chromosome partition protein Smc from Thermoplasma acidophilum (strain ATCC 25905 / DSM 1728 / JCM 9062 / NBRC 15155 / AMRC-C165).